We begin with the raw amino-acid sequence, 207 residues long: uncharacterized protein (207 aa).

Its subcellular location is the mitochondrion. This is an uncharacterized protein from Marchantia polymorpha (Common liverwort).